A 434-amino-acid polypeptide reads, in one-letter code: Probable phosphoglucosamine mutase (434 aa).

S91 acts as the Phosphoserine intermediate in catalysis. Residues S91, D229, D231, and D233 each coordinate Mg(2+). S91 is subject to Phosphoserine.

The protein belongs to the phosphohexose mutase family. Mg(2+) is required as a cofactor. Post-translationally, activated by phosphorylation.

The enzyme catalyses alpha-D-glucosamine 1-phosphate = D-glucosamine 6-phosphate. Functionally, catalyzes the conversion of glucosamine-6-phosphate to glucosamine-1-phosphate. This Methanosarcina acetivorans (strain ATCC 35395 / DSM 2834 / JCM 12185 / C2A) protein is Probable phosphoglucosamine mutase.